The sequence spans 745 residues: 5-methyltetrahydropteroyltriglutamate--homocysteine methyltransferase (745 aa).

2 residues coordinate 5-methyltetrahydropteroyltri-L-glutamate: lysine 19 and asparagine 115. L-homocysteine-binding positions include 420–422 and glutamate 473; that span reads IGS. L-methionine is bound by residues 420–422 and glutamate 473; that span reads IGS. 5-methyltetrahydropteroyltri-L-glutamate is bound by residues aspartate 478, tyrosine 501, 504–505, and tryptophan 550; that span reads RA. Residue aspartate 588 coordinates L-homocysteine. Aspartate 588 lines the L-methionine pocket. Zn(2+) is bound by residues histidine 630, cysteine 632, and glutamate 654. Histidine 683 (proton donor) is an active-site residue. Cysteine 715 contacts Zn(2+).

It belongs to the vitamin-B12 independent methionine synthase family. It depends on Zn(2+) as a cofactor.

The enzyme catalyses 5-methyltetrahydropteroyltri-L-glutamate + L-homocysteine = tetrahydropteroyltri-L-glutamate + L-methionine. The protein operates within amino-acid biosynthesis; L-methionine biosynthesis via de novo pathway; L-methionine from L-homocysteine (MetE route): step 1/1. Catalyzes the transfer of a methyl group from 5-methyltetrahydrofolate to homocysteine resulting in methionine formation. This Streptococcus mutans serotype c (strain ATCC 700610 / UA159) protein is 5-methyltetrahydropteroyltriglutamate--homocysteine methyltransferase.